Reading from the N-terminus, the 513-residue chain is ATP synthase subunit alpha (513 aa).

Position 169–176 (169–176) interacts with ATP; sequence GDRQIGKT.

It belongs to the ATPase alpha/beta chains family. As to quaternary structure, F-type ATPases have 2 components, CF(1) - the catalytic core - and CF(0) - the membrane proton channel. CF(1) has five subunits: alpha(3), beta(3), gamma(1), delta(1), epsilon(1). CF(0) has three main subunits: a(1), b(2) and c(9-12). The alpha and beta chains form an alternating ring which encloses part of the gamma chain. CF(1) is attached to CF(0) by a central stalk formed by the gamma and epsilon chains, while a peripheral stalk is formed by the delta and b chains.

It localises to the cell inner membrane. It catalyses the reaction ATP + H2O + 4 H(+)(in) = ADP + phosphate + 5 H(+)(out). Functionally, produces ATP from ADP in the presence of a proton gradient across the membrane. The alpha chain is a regulatory subunit. The protein is ATP synthase subunit alpha of Shewanella piezotolerans (strain WP3 / JCM 13877).